Here is a 403-residue protein sequence, read N- to C-terminus: MHIKTLTVSQLNRYVKNTLDADFILNNASVKGEISNLKIHSSGHIYFSLKDGGSKINCVMFKSYAYNLKFALENGMDVVALGNVSVYEKEGSYQLYVKDIKREGIGDLYVAFEKLKEKLKEEGLFDDVHKKEIPKFSKKVGVITSPTGAVLKDIINVTKRRNKGIELLIYPALVQGTNASRTLIEGIKILNKVEDVDIIILARGGGSIEELWAFNNEELAYAVYNSKKPIITGVGHETDFTIVDFVSDRRAPTPSAAAEIAVFDREVLINEILNYKYNIKNSMENIIKEKRNYLNLYKQKIEANSPTNIIVNEYKNIDNLKELLNMKIEGKLNKEKNNLSRLSSLLEAHNPLNVLKKGYTLIEDEGNNLITEKEALKKLNKINIIFKDGRAKLSIEYIEEFLK.

It belongs to the XseA family. As to quaternary structure, heterooligomer composed of large and small subunits.

The protein localises to the cytoplasm. It catalyses the reaction Exonucleolytic cleavage in either 5'- to 3'- or 3'- to 5'-direction to yield nucleoside 5'-phosphates.. In terms of biological role, bidirectionally degrades single-stranded DNA into large acid-insoluble oligonucleotides, which are then degraded further into small acid-soluble oligonucleotides. In Clostridium botulinum (strain Okra / Type B1), this protein is Exodeoxyribonuclease 7 large subunit.